The sequence spans 248 residues: MLPTRPQTNSSRTINTSTQGSTLADILERVLDKGIVIAGDISISIASTELVHIRIRLLISSVDKAKEMGINWWESDPYLSTKAQRLVEENQQLQHRLESLEAKLNSLTSSSVKEEIPLAADVKDDLYQTSAKIPSPVDTPIEVLDFQAQSSGGTPPYVNTSMEILDFQAQTSAESSSPVGSTVEILDFQAQTSEESSSPVVSTVEILDFQAQTSEESSSPVGSTVEILDFQAQTSEEIPSSVDPAIDV.

The stretch at 121 to 140 (DVKDDLYQTSAKIPSPVDTP) is one 1; truncated repeat. A 6 X 21 AA approximate tandem repeats region spans residues 121–245 (DVKDDLYQTS…EEIPSSVDPA (125 aa)). Repeat copies occupy residues 141–161 (IEVL…VNTS), 162–182 (MEIL…VGST), 183–203 (VEIL…VVST), 204–224 (VEIL…VGST), and 225–245 (VEIL…VDPA).

This sequence belongs to the gas vesicle GvpA family. Interacts with GvpA.

It is found in the gas vesicle. Its function is as follows. A minor component of the gas vesicle, might be involved in nucleating gas vesicle formation. Gas vesicles (GV) are hollow, gas filled proteinaceous nanostructures. During planktonic growth they allow positioning of the organism at a favorable depth for light or nutrient acquisition. The chain is Gas vesicle protein J from Dolichospermum flosaquae (Anabaena flos-aquae).